An 898-amino-acid chain; its full sequence is Tight junction protein ZO-3 (898 aa).

The region spanning 11 to 93 (TATLCRDPRR…LANITVKRPR (83 aa)) is the PDZ 1 domain. The interval 98 to 165 (PATKAGTSGR…SPGGNSEANG (68 aa)) is disordered. Phosphoserine occurs at positions 128, 156, 161, 195, and 313. The PDZ 2 domain maps to 187-264 (SVLVRRTESE…KLTLLVLRDR (78 aa)). Positions 295-368 (LSQAVPSHVP…QSAEDRGYSP (74 aa)) are disordered. Residues 312–349 (RSLDSDGTDSPRDSPPLRRENSLDSRTISEPDAPRHSS) are compositionally biased toward basic and acidic residues. The residue at position 319 (Thr319) is a Phosphothreonine. Phosphoserine occurs at positions 321 and 360. In terms of domain architecture, PDZ 3 spans 369–435 (DSRVVRFHKG…LTREEAVQFL (67 aa)). The SH3 domain occupies 464–538 (GDSFYIRTHF…PNQSRAEQLA (75 aa)). Positions 569-750 (LRRGAKKSTQ…WYQELKAVVR (182 aa)) constitute a Guanylate kinase-like domain. Ser580 carries the post-translational modification Phosphoserine. Residues 759–898 (TAEDQLDNSS…GYDWGPATDL (140 aa)) form a disordered region. A compositionally biased stretch (acidic residues) spans 762-772 (DQLDNSSEDNL). The segment covering 780 to 790 (ADSSADLSCDS) has biased composition (low complexity). Over residues 796–814 (YETDGEGYTDGEGYTDVDE) the composition is skewed to acidic residues. Residues 831–841 (EEPRSPRDHGR) are compositionally biased toward basic and acidic residues. A phosphoserine mark is found at Ser835, Ser884, and Ser885.

It belongs to the MAGUK family. As to quaternary structure, heterodimer with TJP1. Interacts with UBN1. Interacts with occludin OCLN and claudins. Interacts with PATJ. Interacts with FASLG. Interacts with CCND1. In terms of processing, phosphorylated.

The protein localises to the cell membrane. It is found in the cell junction. Its subcellular location is the tight junction. The protein resides in the nucleus. Functionally, TJP1, TJP2, and TJP3 are closely related scaffolding proteins that link tight junction (TJ) transmembrane proteins such as claudins, junctional adhesion molecules, and occludin to the actin cytoskeleton. The tight junction acts to limit movement of substances through the paracellular space and as a boundary between the compositionally distinct apical and basolateral plasma membrane domains of epithelial and endothelial cells. Binds and recruits PATJ to tight junctions where it connects and stabilizes apical and lateral components of tight junctions. Promotes cell-cycle progression through the sequestration of cyclin D1 (CCND1) at tight junctions during mitosis which prevents CCND1 degradation during M-phase and enables S-phase transition. With TJP1 and TJP2, participates in the junctional retention and stability of the transcription factor DBPA, but is not involved in its shuttling to the nucleus. Contrary to TJP2, TJP3 is dispensable for individual viability, embryonic development, epithelial differentiation, and the establishment of TJs, at least in the laboratory environment. The polypeptide is Tight junction protein ZO-3 (TJP3) (Canis lupus familiaris (Dog)).